The primary structure comprises 58 residues: Small ribosomal subunit protein bS21 (58 aa).

The protein belongs to the bacterial ribosomal protein bS21 family.

The chain is Small ribosomal subunit protein bS21 from Lacticaseibacillus paracasei (strain ATCC 334 / BCRC 17002 / CCUG 31169 / CIP 107868 / KCTC 3260 / NRRL B-441) (Lactobacillus paracasei).